A 307-amino-acid chain; its full sequence is Elongation factor Ts (307 aa).

The involved in Mg(2+) ion dislocation from EF-Tu stretch occupies residues 80–83; it reads TDFV.

The protein belongs to the EF-Ts family.

It localises to the cytoplasm. Associates with the EF-Tu.GDP complex and induces the exchange of GDP to GTP. It remains bound to the aminoacyl-tRNA.EF-Tu.GTP complex up to the GTP hydrolysis stage on the ribosome. The sequence is that of Elongation factor Ts from Bradyrhizobium sp. (strain ORS 278).